The chain runs to 267 residues: MKEIKEAYQQCGQIVGEYAPACFKALSYLPLKQRQASWAVLSFCHTAASADEKVLPAFEAKADHVYQRTNNGKQHLWKAFDHAYRTFTLESEPFREFIAAQKEDAKPYDDLDELLMYAYRTGGAAGLMLLPILTRRKQDQLKQAAVSLGLAIQLVRFLSDLGTDQQKNRIPRQVMQQFGYTEADLQKGTVNKAFTMTWEYIAFEAEAYLEECQDALPLFPQYSQKTVKAALHLHRAVLEKIRAKQHDVFQYHFALTETEVKQILSDI.

The protein belongs to the phytoene/squalene synthase family. As to quaternary structure, monomer.

The catalysed reaction is (2E,6E)-farnesyl diphosphate + H2O = (2E,6E)-farnesol + diphosphate. Its activity is regulated as follows. Diphosphate release from FPP is inhibited by zaragozic acid. In terms of biological role, a farnesyl diphosphate (FPP) phosphatase. Involved in biofilm formation, its disruption blocks biofilm synthesis which is restored by exogenous farnesol. Releases diphosphate from FPP, was initally suggested to be a squalene synthase. Diphosphate release is higher from FPP than geranyl pyrophosphate (GPP) or geranylgeranyl pyrophosphate (GGPP). Biofilm synthesis is partially restored by exogenous squalene, beta-carotene or retinol. Required for integrity of cell membrane lipid rafts. Involved in spatial organization of membranes, required for the flotillin-like proteins FloT and FloA to function correctly. This chain is Farnesyl diphosphate phosphatase YisP (yisP), found in Bacillus subtilis (strain 168).